The primary structure comprises 766 residues: Protein zer-1 homolog (766 aa).

Ala2 carries the N-acetylalanine modification. LRR repeat units follow at residues 226–245 (SLVL…IVQL), 246–268 (HKLR…KLTR), and 278–302 (LGNL…KMEE). ARM repeat units lie at residues 427 to 467 (RSEQ…NFSI), 511 to 556 (DNDH…NITD), 558 to 600 (TPDN…NVAE), 602 to 643 (KELR…HIMF), and 714 to 756 (PDKY…HCSN).

This sequence belongs to the zyg-11 family. Interacts with the ELOC-ELOB/Elongin BC complex. Part of an E3 ubiquitin ligase complex including ZER1, CUL2 and Elongin BC. In terms of tissue distribution, expressed in testis, spermatocytes and spermatids (at protein level). Expressed in spermatocytes, spermatids, prostate, skeletal muscle, ovary, small intestine, heart, brain and pancreas.

Functionally, serves as substrate adapter subunit in the E3 ubiquitin ligase complex ZYG11B-CUL2-Elongin BC. Acts to target substrates bearing N-terminal degrons for proteasomal degradation with the first four residues of substrates being the key recognition elements. Involved in the clearance of proteolytic fragments generated by caspase cleavage during apoptosis since N-terminal glycine degrons are strongly enriched at caspase cleavage sites. Also important in the quality control of protein N-myristoylation in which N-terminal glycine degrons are conditionally exposed after a failure of N-myristoylation. This chain is Protein zer-1 homolog, found in Homo sapiens (Human).